The chain runs to 440 residues: D-serine dehydratase (440 aa).

An N6-(pyridoxal phosphate)lysine modification is found at K116.

Belongs to the serine/threonine dehydratase family. DsdA subfamily. Monomer. Requires pyridoxal 5'-phosphate as cofactor.

It carries out the reaction D-serine = pyruvate + NH4(+). The sequence is that of D-serine dehydratase from Salmonella arizonae (strain ATCC BAA-731 / CDC346-86 / RSK2980).